A 127-amino-acid chain; its full sequence is Riboflavin kinase (127 aa).

10-15 contacts CDP; that stretch reads GLGEGR. T39 and N41 together coordinate Mg(2+). FMN contacts are provided by T96 and E104. 109–112 provides a ligand contact to CDP; sequence IQLR.

This sequence belongs to the archaeal riboflavin kinase family. Requires Mg(2+) as cofactor.

The catalysed reaction is riboflavin + CTP = CDP + FMN + H(+). It functions in the pathway cofactor biosynthesis; FMN biosynthesis; FMN from riboflavin (CTP route): step 1/1. In terms of biological role, catalyzes the CTP-dependent phosphorylation of riboflavin (vitamin B2) to form flavin mononucleotide (FMN). This is Riboflavin kinase from Methanococcus maripaludis (strain C5 / ATCC BAA-1333).